The chain runs to 146 residues: Ecotin-like protein 1 (146 aa).

This sequence belongs to the protease inhibitor I11 (ecotin) family.

In Leishmania infantum, this protein is Ecotin-like protein 1 (ISP1).